A 101-amino-acid chain; its full sequence is Integration host factor subunit beta (101 aa).

Residues 62–84 form a disordered region; that stretch reads RNPKTGESVALPGKHVPHFKPGK.

It belongs to the bacterial histone-like protein family. As to quaternary structure, heterodimer of an alpha and a beta chain.

Functionally, this protein is one of the two subunits of integration host factor, a specific DNA-binding protein that functions in genetic recombination as well as in transcriptional and translational control. The polypeptide is Integration host factor subunit beta (Stenotrophomonas maltophilia (strain K279a)).